We begin with the raw amino-acid sequence, 130 residues long: Small ribosomal subunit protein uS9 (130 aa).

Belongs to the universal ribosomal protein uS9 family.

This Pseudomonas syringae pv. tomato (strain ATCC BAA-871 / DC3000) protein is Small ribosomal subunit protein uS9.